The sequence spans 200 residues: Potassium-transporting ATPase KdpC subunit (200 aa).

Residues 6–26 (PALVLLILLTLITGIAYPLLT) traverse the membrane as a helical segment.

Belongs to the KdpC family. As to quaternary structure, the system is composed of three essential subunits: KdpA, KdpB and KdpC.

It is found in the cell inner membrane. Its function is as follows. Part of the high-affinity ATP-driven potassium transport (or Kdp) system, which catalyzes the hydrolysis of ATP coupled with the electrogenic transport of potassium into the cytoplasm. This subunit acts as a catalytic chaperone that increases the ATP-binding affinity of the ATP-hydrolyzing subunit KdpB by the formation of a transient KdpB/KdpC/ATP ternary complex. This chain is Potassium-transporting ATPase KdpC subunit, found in Yersinia pseudotuberculosis serotype O:1b (strain IP 31758).